Consider the following 54-residue polypeptide: UPF0391 membrane protein Reut_A0124 (54 aa).

Transmembrane regions (helical) follow at residues 5-25 (ALVFFVIALIAAVFGFGGIAA) and 30-50 (IAKILFFIFLIVALVTAVMGL).

This sequence belongs to the UPF0391 family.

Its subcellular location is the cell membrane. This Cupriavidus pinatubonensis (strain JMP 134 / LMG 1197) (Cupriavidus necator (strain JMP 134)) protein is UPF0391 membrane protein Reut_A0124.